We begin with the raw amino-acid sequence, 204 residues long: Protein G1-like5 (204 aa).

Disordered regions lie at residues 1 to 45 (MEFV…ESQK) and 157 to 204 (RARG…GAAA). Residues 26–39 (TGATSASAAGASPS) show a composition bias toward low complexity. One can recognise an ALOG domain in the interval 40 to 167 (RYESQKRRDW…ARGVSYEKKK (128 aa)). The Nuclear localization signal signature appears at 165-169 (KKKRK).

This sequence belongs to the plant homeotic and developmental regulators ALOG protein family.

The protein resides in the nucleus. Probable transcription regulator that acts as a developmental regulator by promoting cell growth in response to light. This chain is Protein G1-like5 (G1L5), found in Oryza sativa subsp. japonica (Rice).